Consider the following 397-residue polypeptide: Xyloglucan O-acetyltransferase 3 (397 aa).

The Cytoplasmic portion of the chain corresponds to 1–3 (MNR). The chain crosses the membrane as a helical; Signal-anchor for type II membrane protein span at residues 4 to 24 (FFYTVGLIFLFSFFILYSPKT). Residues 25–397 (SDLSNNVDLH…RHAFTDFTWS (373 aa)) lie on the Lumenal side of the membrane. Cystine bridges form between Cys48-Cys98, Cys69-Cys134, Cys78-Cys370, and Cys293-Cys366. Asn66 carries N-linked (GlcNAc...) asparagine glycosylation. Positions 121-123 (GDS) match the GDS motif motif. Catalysis depends on Ser123, which acts as the Nucleophile. N-linked (GlcNAc...) asparagine glycosylation is found at Asn162, Asn182, and Asn294. Asp365 serves as the catalytic Proton donor. The DXXH motif motif lies at 365-368 (DCVH). His368 serves as the catalytic Proton acceptor.

It belongs to the PC-esterase family. TBL subfamily.

Its subcellular location is the golgi apparatus membrane. In terms of biological role, xyloglucan acetyltransferase that catalyzes the acetylation of fucosylated Gal residues on xyloglucan side chains. Predominantly catalyze 6-O-monoacetylation of Gal residues in the Fuc-Gal-Xyl trisaccharide side chains of xyloglucan oligomers. The protein is Xyloglucan O-acetyltransferase 3 of Populus trichocarpa (Western balsam poplar).